We begin with the raw amino-acid sequence, 274 residues long: Aliphatic sulfonates import ATP-binding protein SsuB 2 (274 aa).

Positions 21 to 235 (VQLRNVVRQF…DSGQAGFQLI (215 aa)) constitute an ABC transporter domain. 53–60 (GASGSGKT) is an ATP binding site.

The protein belongs to the ABC transporter superfamily. Aliphatic sulfonates importer (TC 3.A.1.17.2) family. In terms of assembly, the complex is composed of two ATP-binding proteins (SsuB), two transmembrane proteins (SsuC) and a solute-binding protein (SsuA).

It localises to the cell inner membrane. It carries out the reaction ATP + H2O + aliphatic sulfonate-[sulfonate-binding protein]Side 1 = ADP + phosphate + aliphatic sulfonateSide 2 + [sulfonate-binding protein]Side 1.. Functionally, part of the ABC transporter complex SsuABC involved in aliphatic sulfonates import. Responsible for energy coupling to the transport system. The protein is Aliphatic sulfonates import ATP-binding protein SsuB 2 of Pseudomonas syringae pv. syringae (strain B728a).